Here is a 247-residue protein sequence, read N- to C-terminus: tRNA uridine(34) hydroxylase (247 aa).

A Rhodanese domain is found at 124-218; the sequence is TKQNVIVIDT…YLEDTQNKNN (95 aa). Cys178 acts as the Cysteine persulfide intermediate in catalysis.

It belongs to the TrhO family.

The enzyme catalyses uridine(34) in tRNA + AH2 + O2 = 5-hydroxyuridine(34) in tRNA + A + H2O. Catalyzes oxygen-dependent 5-hydroxyuridine (ho5U) modification at position 34 in tRNAs. The protein is tRNA uridine(34) hydroxylase of Rickettsia akari (strain Hartford).